The sequence spans 382 residues: Probable purine permease 4 (382 aa).

Helical transmembrane passes span 25 to 45, 62 to 82, 98 to 118, 121 to 141, 150 to 170, 185 to 205, 224 to 244, 260 to 280, 291 to 311, and 315 to 335; these read LTLLIVTYFFLFFGSIASSLL, WVQSAGFPLLLILIYFPHYVL, LIFSVLIGLVLGFNNFLFSWG, YLPVSTSSLLLSTQLVFTLIL, ITFSNLNCVVLLTLSSVLLAL, YFIGYVSTIGAGLLFALYLPV, LVMEFAATVFATIGMACEGGF, TFYWTFAILANVVTWQLSFAA, ITGGICMTALLAMNVIGGVVA, and VFGGVKIVSTVLCIWGFSSYT. The 105-residue stretch at 66 to 170 folds into the EamA domain; the sequence is AGFPLLLILI…LTLSSVLLAL (105 aa). Residues 345–364 form a disordered region; sequence EEKEKGEYSGVKTTEDSGEM.

This sequence belongs to the purine permeases (TC 2.A.7.14) family.

The protein resides in the membrane. This Arabidopsis thaliana (Mouse-ear cress) protein is Probable purine permease 4 (PUP4).